The primary structure comprises 298 residues: 2-dehydropantoate 2-reductase (298 aa).

NADP(+) is bound by residues 7-12 (GGGSVG), Asn98, and Ala124. Asn98 is a substrate binding site. Catalysis depends on Lys179, which acts as the Proton donor. 4 residues coordinate substrate: Asn183, Asn187, Asn197, and Ser246. Glu258 is a binding site for NADP(+).

This sequence belongs to the ketopantoate reductase family.

The protein localises to the cytoplasm. It carries out the reaction (R)-pantoate + NADP(+) = 2-dehydropantoate + NADPH + H(+). It functions in the pathway cofactor biosynthesis; (R)-pantothenate biosynthesis; (R)-pantoate from 3-methyl-2-oxobutanoate: step 2/2. Its function is as follows. Catalyzes the NADPH-dependent reduction of ketopantoate into pantoic acid. The sequence is that of 2-dehydropantoate 2-reductase (panE) from Bacillus subtilis (strain 168).